We begin with the raw amino-acid sequence, 219 residues long: Large ribosomal subunit protein uL3 (219 aa).

Disordered regions lie at residues 62-81 (DSRSSKYANKPAEGHAKKAG) and 136-156 (QARGPMSHGSHFHRAPGSVGM).

The protein belongs to the universal ribosomal protein uL3 family. Part of the 50S ribosomal subunit. Forms a cluster with proteins L14 and L19.

In terms of biological role, one of the primary rRNA binding proteins, it binds directly near the 3'-end of the 23S rRNA, where it nucleates assembly of the 50S subunit. This Staphylococcus saprophyticus subsp. saprophyticus (strain ATCC 15305 / DSM 20229 / NCIMB 8711 / NCTC 7292 / S-41) protein is Large ribosomal subunit protein uL3.